A 492-amino-acid polypeptide reads, in one-letter code: Ketol-acid reductoisomerase (NADP(+)) (492 aa).

Positions 15–208 (AQLGKCRFMA…GGHRAGVLEF (194 aa)) constitute a KARI N-terminal Rossmann domain. NADP(+)-binding positions include 45–48 (CGAQ), arginine 68, arginine 76, serine 78, and 108–110 (DKQ). The active site involves histidine 132. Glycine 158 contacts NADP(+). KARI C-terminal knotted domains lie at 209 to 344 (SFVA…NAPQ) and 345 to 485 (FEGK…MTDM). Mg(2+) contacts are provided by aspartate 217, glutamate 221, glutamate 389, and glutamate 393. Serine 414 contributes to the substrate binding site.

It belongs to the ketol-acid reductoisomerase family. Requires Mg(2+) as cofactor.

It catalyses the reaction (2R)-2,3-dihydroxy-3-methylbutanoate + NADP(+) = (2S)-2-acetolactate + NADPH + H(+). The catalysed reaction is (2R,3R)-2,3-dihydroxy-3-methylpentanoate + NADP(+) = (S)-2-ethyl-2-hydroxy-3-oxobutanoate + NADPH + H(+). It participates in amino-acid biosynthesis; L-isoleucine biosynthesis; L-isoleucine from 2-oxobutanoate: step 2/4. Its pathway is amino-acid biosynthesis; L-valine biosynthesis; L-valine from pyruvate: step 2/4. Its function is as follows. Involved in the biosynthesis of branched-chain amino acids (BCAA). Catalyzes an alkyl-migration followed by a ketol-acid reduction of (S)-2-acetolactate (S2AL) to yield (R)-2,3-dihydroxy-isovalerate. In the isomerase reaction, S2AL is rearranged via a Mg-dependent methyl migration to produce 3-hydroxy-3-methyl-2-ketobutyrate (HMKB). In the reductase reaction, this 2-ketoacid undergoes a metal-dependent reduction by NADPH to yield (R)-2,3-dihydroxy-isovalerate. The protein is Ketol-acid reductoisomerase (NADP(+)) of Yersinia pestis bv. Antiqua (strain Antiqua).